The following is a 648-amino-acid chain: Threonine--tRNA ligase (648 aa).

The TGS domain maps to 1 to 61 (MIDIILPDGS…INTATVKAIT (61 aa)). A catalytic region spans residues 243–549 (DHRKLGRELE…LIEHYSGKLP (307 aa)). Positions 349, 400, and 526 each coordinate Zn(2+).

This sequence belongs to the class-II aminoacyl-tRNA synthetase family. Homodimer. It depends on Zn(2+) as a cofactor.

The protein localises to the cytoplasm. The catalysed reaction is tRNA(Thr) + L-threonine + ATP = L-threonyl-tRNA(Thr) + AMP + diphosphate + H(+). In terms of biological role, catalyzes the attachment of threonine to tRNA(Thr) in a two-step reaction: L-threonine is first activated by ATP to form Thr-AMP and then transferred to the acceptor end of tRNA(Thr). Also edits incorrectly charged L-seryl-tRNA(Thr). The sequence is that of Threonine--tRNA ligase from Orientia tsutsugamushi (strain Ikeda) (Rickettsia tsutsugamushi).